The primary structure comprises 279 residues: ATP synthase gamma chain (279 aa).

Belongs to the ATPase gamma chain family. In terms of assembly, F-type ATPases have 2 components, CF(1) - the catalytic core - and CF(0) - the membrane proton channel. CF(1) has five subunits: alpha(3), beta(3), gamma(1), delta(1), epsilon(1). CF(0) has three main subunits: a, b and c.

The protein localises to the cell membrane. Produces ATP from ADP in the presence of a proton gradient across the membrane. The gamma chain is believed to be important in regulating ATPase activity and the flow of protons through the CF(0) complex. This Mycoplasmopsis pulmonis (strain UAB CTIP) (Mycoplasma pulmonis) protein is ATP synthase gamma chain.